The following is an 816-amino-acid chain: Cation/H(+) antiporter 8 (816 aa).

Helical transmembrane passes span 64–84, 97–117, 127–147, 163–183, 197–214, 227–247, 255–275, 297–317, 343–363, 382–402, 413–433, and 447–467; these read PKLE…NILF, MMLA…NSII, IDVA…LKGV, VTGV…FNLK, VMLL…ARLL, VALS…IANV, ADGL…FAVV, IHGV…LSQF, LESF…MLRT, FAVA…SVIV, SIIL…FYLF, and ILVL…GFLY.

Belongs to the monovalent cation:proton antiporter 2 (CPA2) transporter (TC 2.A.37) family. CHX (TC 2.A.37.4) subfamily. As to expression, specifically expressed in pollen.

The protein resides in the membrane. Functionally, may operate as a cation/H(+) antiporter. The chain is Cation/H(+) antiporter 8 (CHX8) from Arabidopsis thaliana (Mouse-ear cress).